The following is a 211-amino-acid chain: DNA-directed RNA polymerases I, II, and III subunit RPABC1 (211 aa).

Belongs to the archaeal Rpo5/eukaryotic RPB5 RNA polymerase subunit family. Component of the RNA polymerase I (Pol I), RNA polymerase II (Pol II) and RNA polymerase III (Pol III) complexes consisting of at least 13, 12 and 17 subunits, respectively. In RNA Pol II, this subunit is present in 2-fold molar excess over the other subunits.

It is found in the nucleus. Its function is as follows. DNA-dependent RNA polymerase catalyzes the transcription of DNA into RNA using the four ribonucleoside triphosphates as substrates. Common component of RNA polymerases I, II and III which synthesize ribosomal RNA precursors, mRNA precursors and many functional non-coding RNAs, and small RNAs, such as 5S rRNA and tRNAs, respectively. Pol II is the central component of the basal RNA polymerase II transcription machinery. Pols are composed of mobile elements that move relative to each other. In Pol II, RPB5 is part of the lower jaw surrounding the central large cleft and thought to grab the incoming DNA template. Seems to be the major component in this process. This is DNA-directed RNA polymerases I, II, and III subunit RPABC1 from Caenorhabditis briggsae.